The primary structure comprises 171 residues: 3-hydroxydecanoyl-[acyl-carrier-protein] dehydratase (171 aa).

Residue His-70 is part of the active site.

Belongs to the thioester dehydratase family. FabA subfamily. As to quaternary structure, homodimer.

The protein localises to the cytoplasm. The catalysed reaction is a (3R)-hydroxyacyl-[ACP] = a (2E)-enoyl-[ACP] + H2O. It carries out the reaction (3R)-hydroxydecanoyl-[ACP] = (2E)-decenoyl-[ACP] + H2O. It catalyses the reaction (2E)-decenoyl-[ACP] = (3Z)-decenoyl-[ACP]. It functions in the pathway lipid metabolism; fatty acid biosynthesis. Necessary for the introduction of cis unsaturation into fatty acids. Catalyzes the dehydration of (3R)-3-hydroxydecanoyl-ACP to E-(2)-decenoyl-ACP and then its isomerization to Z-(3)-decenoyl-ACP. Can catalyze the dehydratase reaction for beta-hydroxyacyl-ACPs with saturated chain lengths up to 16:0, being most active on intermediate chain length. This chain is 3-hydroxydecanoyl-[acyl-carrier-protein] dehydratase, found in Xanthomonas campestris pv. campestris (strain 8004).